A 389-amino-acid chain; its full sequence is Nucleic acid dioxygenase ALKBH1 (389 aa).

The interval 1–127 (MGKMAAAVAS…CLKLYSQKPN (127 aa)) is interaction with DNAJB6. The interval 86 to 389 (SKWRAYGLEG…VKRKRLNPNS (304 aa)) is tRNA-binding. Substrate-binding positions include Trp144 and 175-177 (YHY). Positions 213–347 (QAEAGILNYY…RVNMTVRQVL (135 aa)) constitute a Fe2OG dioxygenase domain. 220–222 (NYY) is a 2-oxoglutarate binding site. Residues His231, Asp233, and His287 each coordinate Fe cation. Residue Asp233 participates in substrate binding. 338 to 344 (RVNMTVR) lines the 2-oxoglutarate pocket.

As to quaternary structure, monomer. Interacts with DNAJB6. Fe(2+) serves as cofactor. In adult organs, highly expressed in testis, eye, brain and kidney.

Its subcellular location is the nucleus. The enzyme catalyses an N(6)-methyl-2'-deoxyadenosine in DNA + 2-oxoglutarate + O2 = a 2'-deoxyadenosine in DNA + formaldehyde + succinate + CO2. The catalysed reaction is 2'-deoxyribonucleotide-(2'-deoxyribose 5'-phosphate)-2'-deoxyribonucleotide-DNA = a 3'-end 2'-deoxyribonucleotide-(2,3-dehydro-2,3-deoxyribose 5'-phosphate)-DNA + a 5'-end 5'-phospho-2'-deoxyribonucleoside-DNA + H(+). It catalyses the reaction a methylated nucleobase within DNA + 2-oxoglutarate + O2 = a nucleobase within DNA + formaldehyde + succinate + CO2. It carries out the reaction an N(1)-methyladenosine in tRNA + 2-oxoglutarate + O2 = an adenosine in tRNA + formaldehyde + succinate + CO2. The enzyme catalyses 5-methylcytidine(34) in mitochondrial tRNA(Met) + 2 2-oxoglutarate + 2 O2 = 5-formylcytidine(34) in mitochondrial tRNA(Met) + 2 succinate + 2 CO2 + H2O. The catalysed reaction is an N(3)-methylcytidine in mRNA + 2-oxoglutarate + O2 = a cytidine in mRNA + formaldehyde + succinate + CO2. It catalyses the reaction N(1)-methyladenosine(58) in tRNA + 2-oxoglutarate + O2 = adenosine(58) in tRNA + formaldehyde + succinate + CO2. Dioxygenase that acts on nucleic acids, such as DNA and tRNA. Requires molecular oxygen, alpha-ketoglutarate and iron. A number of activities have been described for this dioxygenase, but recent results suggest that it mainly acts on tRNAs and mediates their demethylation or oxidation depending on the context and subcellular compartment. Mainly acts as a tRNA demethylase by removing N(1)-methyladenine from various tRNAs, with a preference for N(1)-methyladenine at position 58 (m1A58) present on a stem loop structure of tRNAs. Acts as a regulator of translation initiation and elongation in response to glucose deprivation: regulates both translation initiation, by mediating demethylation of tRNA(Met), and translation elongation, N(1)-methyladenine-containing tRNAs being preferentially recruited to polysomes to promote translation elongation. In mitochondrion, specifically interacts with mt-tRNA(Met) and mediates oxidation of mt-tRNA(Met) methylated at cytosine(34) to form 5-formylcytosine (f(5)c) at this position. mt-tRNA(Met) containing the f(5)c modification at the wobble position enables recognition of the AUA codon in addition to the AUG codon, expanding codon recognition in mitochondrial translation. Specifically demethylates DNA methylated on the 6th position of adenine (N(6)-methyladenosine) DNA. N(6)-methyladenosine (m6A) DNA is present at some L1 elements in embryonic stem cells and probably promotes their silencing. Demethylates mRNAs containing N(3)-methylcytidine modification. Also able to repair alkylated single-stranded DNA by oxidative demethylation, but with low activity. Also has DNA lyase activity and introduces double-stranded breaks at abasic sites: cleaves both single-stranded DNA and double-stranded DNA at abasic sites, with the greatest activity towards double-stranded DNA with two abasic sites. DNA lyase activity does not require alpha-ketoglutarate and iron and leads to the formation of an irreversible covalent protein-DNA adduct with the 5' DNA product. DNA lyase activity is not required during base excision repair and class switch recombination of the immunoglobulin heavy chain during B lymphocyte activation. May play a role in placental trophoblast lineage differentiation. The polypeptide is Nucleic acid dioxygenase ALKBH1 (Mus musculus (Mouse)).